The primary structure comprises 141 residues: ATP synthase epsilon chain (141 aa).

Belongs to the ATPase epsilon chain family. In terms of assembly, F-type ATPases have 2 components, CF(1) - the catalytic core - and CF(0) - the membrane proton channel. CF(1) has five subunits: alpha(3), beta(3), gamma(1), delta(1), epsilon(1). CF(0) has three main subunits: a, b and c.

It localises to the cell membrane. Produces ATP from ADP in the presence of a proton gradient across the membrane. In Mycoplasma mobile (strain ATCC 43663 / 163K / NCTC 11711) (Mesomycoplasma mobile), this protein is ATP synthase epsilon chain.